The following is a 208-amino-acid chain: Outer-membrane lipoprotein carrier protein (208 aa).

The N-terminal stretch at 1–22 (MKKIFAIAALSLPLFSHFPAFA) is a signal peptide.

It belongs to the LolA family. In terms of assembly, monomer.

It localises to the periplasm. Functionally, participates in the translocation of lipoproteins from the inner membrane to the outer membrane. Only forms a complex with a lipoprotein if the residue after the N-terminal Cys is not an aspartate (The Asp acts as a targeting signal to indicate that the lipoprotein should stay in the inner membrane). This Shewanella halifaxensis (strain HAW-EB4) protein is Outer-membrane lipoprotein carrier protein.